The primary structure comprises 401 residues: MKAVGIIVEYNPFHNGHLYHLEETKKQTGADCIIAVMSGNFLQRGEPALVSKWARTKMALSAGVDIVIELPYAFAVQSAEQFASGAVTLLHSLFCEEICFGSENGNITAFIDAAKTFLEQKQQHDSYVQEALQEGVSYPRANAEAWKRLNATNLDLSKPNNVLGLAYVKAILQKQIPITPRTIRRIASDYHDKTFSHPSIASATSLRKALKGSLAHLETIAPYIPGTTKQTLEQYYDTYGMFHEWEAYFPFLKYRIMTAEEAELRQIAGVDEGIEHRLKQEIVAAPTFSAFMNSIKTKRYTWTRLQRICTHILTNFTKDQRKKTETPTYIRLLGMSSNGRRYLQHVKKHLPLPLVTKVSNLKHDPIYQQEKKASFAYAAIFPEPARTNVLKEEYATPPLLQ.

ATP is bound by residues 7–20, G101, N160, and 185–186; these read IVEYNPFHNGHLYH and RI.

Belongs to the TmcAL family.

Its subcellular location is the cytoplasm. The enzyme catalyses cytidine(34) in elongator tRNA(Met) + acetate + ATP = N(4)-acetylcytidine(34) in elongator tRNA(Met) + AMP + diphosphate. Functionally, catalyzes the formation of N(4)-acetylcytidine (ac(4)C) at the wobble position of elongator tRNA(Met), using acetate and ATP as substrates. First activates an acetate ion to form acetyladenylate (Ac-AMP) and then transfers the acetyl group to tRNA to form ac(4)C34. In Geobacillus sp. (strain WCH70), this protein is tRNA(Met) cytidine acetate ligase.